An 80-amino-acid polypeptide reads, in one-letter code: Raniseptin-8 (80 aa).

The N-terminal stretch at 1–22 (MAFLKKSLFLVLFLGIVSLSIC) is a signal peptide. The propeptide occupies 23–49 (EEEKREGEEEEKQEEENEELSEEELRE). The interval 27 to 46 (REGEEEEKQEEENEELSEEE) is disordered. The segment covering 30 to 44 (EEEEKQEEENEELSE) has biased composition (acidic residues).

Belongs to the frog skin active peptide (FSAP) family. Dermaseptin subfamily. In terms of tissue distribution, expressed by the skin glands.

It localises to the secreted. Has antibacterial activity. The sequence is that of Raniseptin-8 from Boana raniceps (Chaco tree frog).